The following is an 89-amino-acid chain: MNIIKSKTGNFKFISRIGILNYKRCFTTVKTPQPLEPHEHPKPMEPNEFDPKPDDPPRNPDPSPFPNEVPKPKPSDFPIPDELYPQPIV.

Positions 31-89 (TPQPLEPHEHPKPMEPNEFDPKPDDPPRNPDPSPFPNEVPKPKPSDFPIPDELYPQPIV) are disordered. Positions 36 to 58 (EPHEHPKPMEPNEFDPKPDDPPR) are enriched in basic and acidic residues. A compositionally biased stretch (pro residues) spans 59-69 (NPDPSPFPNEV).

This is an uncharacterized protein from Dictyostelium discoideum (Social amoeba).